The primary structure comprises 295 residues: Probable cell division protein WhiA (295 aa).

Positions 262–293 (SLRELGKKLNLTKSQIYSKLKRIIKIAERFGD) form a DNA-binding region, H-T-H motif.

The protein belongs to the WhiA family.

Its function is as follows. Involved in cell division and chromosome segregation. The protein is Probable cell division protein WhiA of Thermotoga maritima (strain ATCC 43589 / DSM 3109 / JCM 10099 / NBRC 100826 / MSB8).